A 148-amino-acid chain; its full sequence is Transcription antitermination protein NusB (148 aa).

Belongs to the NusB family.

In terms of biological role, involved in transcription antitermination. Required for transcription of ribosomal RNA (rRNA) genes. Binds specifically to the boxA antiterminator sequence of the ribosomal RNA (rrn) operons. This chain is Transcription antitermination protein NusB, found in Saccharopolyspora erythraea (strain ATCC 11635 / DSM 40517 / JCM 4748 / NBRC 13426 / NCIMB 8594 / NRRL 2338).